A 269-amino-acid polypeptide reads, in one-letter code: NAD-capped RNA hydrolase NudC (269 aa).

R81 lines the substrate pocket. The Zn(2+) site is built by C110, C113, C128, and C131. Substrate is bound at residue Y136. In terms of domain architecture, Nudix hydrolase spans P137–T260. A divalent metal cation contacts are provided by A170, E186, and E190. The short motif at G171 to G192 is the Nudix box element. Q204–S211 contributes to the substrate binding site. E231 lines the a divalent metal cation pocket. A253 serves as a coordination point for substrate.

Belongs to the Nudix hydrolase family. NudC subfamily. As to quaternary structure, homodimer. Mg(2+) is required as a cofactor. Requires Mn(2+) as cofactor. The cofactor is Zn(2+).

It carries out the reaction a 5'-end NAD(+)-phospho-ribonucleoside in mRNA + H2O = a 5'-end phospho-adenosine-phospho-ribonucleoside in mRNA + beta-nicotinamide D-ribonucleotide + 2 H(+). It catalyses the reaction NAD(+) + H2O = beta-nicotinamide D-ribonucleotide + AMP + 2 H(+). The enzyme catalyses NADH + H2O = reduced beta-nicotinamide D-ribonucleotide + AMP + 2 H(+). Its function is as follows. mRNA decapping enzyme that specifically removes the nicotinamide adenine dinucleotide (NAD) cap from a subset of mRNAs by hydrolyzing the diphosphate linkage to produce nicotinamide mononucleotide (NMN) and 5' monophosphate mRNA. The NAD-cap is present at the 5'-end of some mRNAs and stabilizes RNA against 5'-processing. Has preference for mRNAs with a 5'-end purine. Catalyzes the hydrolysis of a broad range of dinucleotide pyrophosphates. The chain is NAD-capped RNA hydrolase NudC from Vibrio cholerae serotype O1 (strain ATCC 39315 / El Tor Inaba N16961).